Here is a 320-residue protein sequence, read N- to C-terminus: MRLLALAAAALLARAPAPEVCAALNVTVSPGPVVDYLEGENATLLCHVSQKRRKDSLLAVRWFFAHSFDSQEALMVKMTKLRVVQYYGNFSRSAKRRRLRLLEEQRGALYRLSVLTLQPSDQGHYVCRVQEISRHRNKWTAWSNGSSATEMRVISLKASEESSFEKTKETWAFFEDLYVYAVLVCCVGILSILLFMLVIVWQSVFNKRKSRVRHYLVKCPQNSSGETVTSVTSLAPLQPKKGKRQKEKPDIPPAVPAKAPIAPTFHKPKLLKPQRKVTLPKIAEENLTYAELELIKPHRAAKGAPTSTVYAQILFEENKL.

An N-terminal signal peptide occupies residues 1–23 (MRLLALAAAALLARAPAPEVCAA). The region spanning 24–155 (LNVTVSPGPV…SSATEMRVIS (132 aa)) is the Ig-like domain. Residues 24–180 (LNVTVSPGPV…WAFFEDLYVY (157 aa)) lie on the Extracellular side of the membrane. Asn25, Asn41, Asn89, and Asn144 each carry an N-linked (GlcNAc...) asparagine glycan. Cys46 and Cys127 are joined by a disulfide. A helical transmembrane segment spans residues 181–201 (AVLVCCVGILSILLFMLVIVW). Residues 202–320 (QSVFNKRKSR…AQILFEENKL (119 aa)) lie on the Cytoplasmic side of the membrane.

Proteolytically cleaved to generate a bioactive peptide.

Its subcellular location is the secreted. The protein localises to the cell membrane. In terms of biological role, peptide Lv enhances L-type voltage-gated calcium channel (L-VGCC) currents in retinal photoreceptors. This is V-set and transmembrane domain-containing protein 4 (VSTM4) from Homo sapiens (Human).